A 300-amino-acid chain; its full sequence is MYNMMETEIKSPIPQSNTGSVTGGKNNSANDQDRVKRPMNAFMVWSRGQRRKMAQENPKMHNSEISKRLGADWKLLTDAEKRPFIDEAKRLRAMHMKEHPDYKYRPRRKTKTLLKKDKYSLPGGLLAPGANAVNNAVSVGQRMDYTHMNGWTNSAYSLMQDQLAYPQHPSMNSPQIQQMHRYDMAGLQYPMMSTAQTYMNAASTYSSMSPAYTQQTSSAMGLGSMASVCKTEPSSPPPAITSHSQRACLGDLRDMISMYLPPGGDSADHSSLQTSRLHSVHPHYQSAGTGVNGTLPLTHI.

The interval 1–35 (MYNMMETEIKSPIPQSNTGSVTGGKNNSANDQDRV) is disordered. Positions 13–30 (IPQSNTGSVTGGKNNSAN) are enriched in polar residues. A DNA-binding region (HMG box) is located at residues 35–103 (VKRPMNAFMV…MHMKEHPDYK (69 aa)). A Phosphoserine modification is found at Ser235. The 9aaTAD signature appears at 251-262 (DLRDMISMYLPP).

The protein resides in the nucleus. Transcriptional activator. The sequence is that of Transcription factor Sox-3 from Danio rerio (Zebrafish).